A 269-amino-acid polypeptide reads, in one-letter code: Protein RKD1 (269 aa).

The 90-residue stretch at 106 to 195 folds into the RWP-RK domain; the sequence is TTTTKKRRCR…EKMEGEENED (90 aa). Residues 175–216 are a coiled coil; the sequence is LQKLISNVKELEKMEGEENEDKLRNALEKLEKEKKTIEKLPD. Residues 230–269 form a disordered region; sequence CFKANHKRKRRSGMSTPITSSSSSASASSSSYSSVSGFER. The segment covering 249–269 has biased composition (low complexity); it reads SSSSSASASSSSYSSVSGFER.

It localises to the nucleus. Putative transcription factor. This is Protein RKD1 (RKD1) from Arabidopsis thaliana (Mouse-ear cress).